Consider the following 132-residue polypeptide: Small ribosomal subunit protein uS8 (132 aa).

The protein belongs to the universal ribosomal protein uS8 family. Part of the 30S ribosomal subunit. Contacts proteins S5 and S12.

Its function is as follows. One of the primary rRNA binding proteins, it binds directly to 16S rRNA central domain where it helps coordinate assembly of the platform of the 30S subunit. The polypeptide is Small ribosomal subunit protein uS8 (Pediococcus pentosaceus (strain ATCC 25745 / CCUG 21536 / LMG 10740 / 183-1w)).